The chain runs to 358 residues: MGFRGKYFFPILMTLSLFLIIRYNYIVSDDPPLRQELPGRRSASSGDDITYTVKTPSKKTKRLFHTAVTATDSVYSTWQCRVMYYWYNRFRDEPGSDMGGYTRILHSGRPDGLMDEIPTFVADPLPSGVDKGYVVLNRPWAFVQWLQQAHIEEDYILMAEPDHIIVKPIPNLARGNLAAAFPFFYIEPKKYESVLRKFFPKENGPISRIDPIGNSPVIVTKNALMKIAPTWMNVSLAMKNDPQTDKAFGWVLEMYAYAVSSALHGVSNILHKDFMIQPPWDTETKKTFIIHYTYGCDFDMKGKMMVGKIGEWRFDKRSYGDKPPPRNLTLPPRGVPESVVTLVTMINEATANIPNWES.

A helical; Signal-anchor membrane pass occupies residues 7–26 (YFFPILMTLSLFLIIRYNYI).

As to expression, ubiquitous.

It localises to the golgi apparatus. It is found in the cis-Golgi network membrane. The catalysed reaction is trans-4-hydroxy-L-prolyl-[protein] + UDP-beta-L-arabinofuranose = O-(beta-L-arabinofuranosyl)-trans-4-hydroxy-L-prolyl-[protein] + UDP + H(+). Glycosyltransferase involved in the O-arabinosylation of several proteins including extensins and small signaling peptides. Catalyzes the transfer of the initial L-arabinose to the hydroxyl group of Hyp residues. Contributes redundantly with HPAT1 and HPAT3 to arabinosylation of EXT3. This Arabidopsis thaliana (Mouse-ear cress) protein is Hydroxyproline O-arabinosyltransferase 2.